The chain runs to 41 residues: U-theraphotoxin-Lk1a (41 aa).

Intrachain disulfides connect Cys1–Cys16, Cys8–Cys21, and Cys15–Cys36.

This sequence belongs to the neurotoxin 14 (magi-1) family. 08 (Ltx-4) subfamily. Expressed by the venom gland.

Its subcellular location is the secreted. Functionally, toxin that causes irreversible contractile paralysis in adult Aedes aegypti resulting in 100% mortality after 24 hours. This chain is U-theraphotoxin-Lk1a, found in Lasiodora klugi (Bahia scarlet tarantula).